The following is a 339-amino-acid chain: Dihydroorotate dehydrogenase (quinone) (339 aa).

FMN contacts are provided by residues 62 to 66 (AGLDK) and Thr-86. Residue Lys-66 participates in substrate binding. 111 to 115 (NRMGF) provides a ligand contact to substrate. FMN is bound by residues Asn-139 and Asn-172. Asn-172 lines the substrate pocket. Ser-175 (nucleophile) is an active-site residue. Residue Asn-177 participates in substrate binding. Positions 217 and 245 each coordinate FMN. 246-247 (NT) is a binding site for substrate. FMN is bound by residues Gly-268, Gly-297, and 318 to 319 (YS).

It belongs to the dihydroorotate dehydrogenase family. Type 2 subfamily. In terms of assembly, monomer. Requires FMN as cofactor.

The protein localises to the cell membrane. It carries out the reaction (S)-dihydroorotate + a quinone = orotate + a quinol. It participates in pyrimidine metabolism; UMP biosynthesis via de novo pathway; orotate from (S)-dihydroorotate (quinone route): step 1/1. Catalyzes the conversion of dihydroorotate to orotate with quinone as electron acceptor. This chain is Dihydroorotate dehydrogenase (quinone), found in Shewanella amazonensis (strain ATCC BAA-1098 / SB2B).